A 150-amino-acid polypeptide reads, in one-letter code: UPF0178 protein DMR_20710 (150 aa).

The protein belongs to the UPF0178 family.

In Solidesulfovibrio magneticus (strain ATCC 700980 / DSM 13731 / RS-1) (Desulfovibrio magneticus), this protein is UPF0178 protein DMR_20710.